Consider the following 43-residue polypeptide: Potassium channel toxin gamma-KTx 4.11 (43 aa).

Intrachain disulfides connect cysteine 5–cysteine 23, cysteine 11–cysteine 34, cysteine 20–cysteine 39, and cysteine 24–cysteine 41.

This sequence belongs to the ergtoxin family. Gamma-KTx 4 subfamily. As to expression, expressed by the venom gland.

Its subcellular location is the secreted. In terms of biological role, reversibly blocks Kv11/ERG potassium channels. In Centruroides noxius (Mexican scorpion), this protein is Potassium channel toxin gamma-KTx 4.11.